Here is an 85-residue protein sequence, read N- to C-terminus: Conotoxin Im28.1 (85 aa).

The N-terminal stretch at 1-21 (MPKLEMMLLVLLILPLCYIDA) is a signal peptide. Positions 22–40 (VGPPPPWNMEDEIIEHWQK) are excised as a propeptide.

The protein belongs to the conotoxin D superfamily. Post-translationally, contains 5 disulfide bonds. In terms of tissue distribution, expressed by the venom duct.

The protein localises to the secreted. Functionally, probable neurotoxin. This chain is Conotoxin Im28.1, found in Conus imperialis (Imperial cone).